The chain runs to 183 residues: UPF0398 protein MCCL_1095 (183 aa).

Belongs to the UPF0398 family.

This chain is UPF0398 protein MCCL_1095, found in Macrococcus caseolyticus (strain JCSC5402) (Macrococcoides caseolyticum).